Consider the following 50-residue polypeptide: Conotoxin Cal6.19 (50 aa).

The signal sequence occupies residues 1–22 (MKVTCVLVLTLMALTVCQVATA). Disulfide bonds link cysteine 24/cysteine 37, cysteine 30/cysteine 41, and cysteine 36/cysteine 46.

Expressed by the venom duct.

Its subcellular location is the secreted. Probable neurotoxin. This chain is Conotoxin Cal6.19, found in Californiconus californicus (California cone).